Here is a 155-residue protein sequence, read N- to C-terminus: Small ribosomal subunit protein uS7c (155 aa).

Belongs to the universal ribosomal protein uS7 family. As to quaternary structure, part of the 30S ribosomal subunit.

It localises to the plastid. It is found in the chloroplast. Functionally, one of the primary rRNA binding proteins, it binds directly to 16S rRNA where it nucleates assembly of the head domain of the 30S subunit. The polypeptide is Small ribosomal subunit protein uS7c (rps7) (Cryptomeria japonica (Japanese cedar)).